Consider the following 55-residue polypeptide: Accessory gland-specific peptide 70A (55 aa).

The signal sequence occupies residues Met-1–Ser-19. The tract at residues Trp-20–Ile-33 is essential for binding to sperm. A hydroxyproline mark is found at Pro-28 and Pro-32. Ile-33 bears the Isoleucine derivative mark. Residues Pro-34, Pro-36, and Pro-38 each carry the hydroxyproline modification. The interval Pro-36–Cys-55 is sufficient to induce PMR. An intrachain disulfide couples Cys-43 to Cys-55.

It belongs to the Drosophila sex peptide family. Post-translationally, sperm-bound protein is cleaved to release an active C-terminal peptide. Gradual release from stored sperm may function to prolong PMR and enhance male reproductive success. In terms of tissue distribution, main cells of the accessory glands of males (paragonial gland).

It is found in the secreted. Its function is as follows. Male seminal protein which triggers short- and long-term post-mating behavioral responses (PMR) in female Drosophila. Binds initially to sperm where it is later cleaved to release an active peptide within the female reproductive tract. Signals via the sex peptide receptor (SPR) in female flies; may also act via other receptors. Moderates the activity of distinct neuronal circuitries in the female genital tract to promote specific PMRs including: enhanced ovulation, increased egg laying rate, increased feeding/foraging rate, induced antimicrobial peptide synthesis, reduced mating receptivity, reduced day-time sleep and reduced lifespan in multiple mated females. The polypeptide is Accessory gland-specific peptide 70A (SP) (Drosophila melanogaster (Fruit fly)).